Consider the following 266-residue polypeptide: Single-stranded DNA-binding protein WHY1, chloroplastic (266 aa).

A chloroplast-targeting transit peptide spans 1–37 (MPPPAPLFLSLASTPPPALMPVHHPRAPQSLTLVPPV). The disordered stretch occupies residues 53 to 81 (SPRHSDYFDPRAPPPPRGDGGYGRPPNGA). Residues 94-99 (KGKAAL) are required for ssDNA binding. Positions 172–185 (KGRSEEGKVRKVLK) match the Nuclear localization signal motif.

Belongs to the Whirly family. Homotetramer.

Its subcellular location is the plastid. The protein localises to the chloroplast stroma. It is found in the nucleus. In terms of biological role, single-stranded DNA and RNA binding protein that maintains plastid genome stability by preventing break-induced and short homology-dependent illegitimate recombinations. Functions in RNA metabolism and is involved in the maturation of the atpF and 23S ribosomal RNAs. This chain is Single-stranded DNA-binding protein WHY1, chloroplastic (WHY1), found in Zea mays (Maize).